Consider the following 265-residue polypeptide: Probable trehalose-phosphate phosphatase (265 aa).

Residue aspartate 35 is the Nucleophile of the active site. Aspartate 35, aspartate 37, and aspartate 213 together coordinate Mg(2+). 35 to 37 (DID) serves as a coordination point for substrate.

This sequence belongs to the trehalose phosphatase family. It depends on Mg(2+) as a cofactor.

The catalysed reaction is alpha,alpha-trehalose 6-phosphate + H2O = alpha,alpha-trehalose + phosphate. It participates in glycan biosynthesis; trehalose biosynthesis. Its function is as follows. Removes the phosphate from trehalose 6-phosphate to produce free trehalose. The chain is Probable trehalose-phosphate phosphatase (otsB) from Sinorhizobium fredii (strain NBRC 101917 / NGR234).